The primary structure comprises 431 residues: tRNA-specific 2-thiouridylase MnmA (431 aa).

ATP-binding positions include 35–42 and Leu-61; that span reads AMSGGVDS. Cys-129 (nucleophile) is an active-site residue. A disulfide bridge connects residues Cys-129 and Cys-226. An ATP-binding site is contributed by Gly-153. The interaction with tRNA stretch occupies residues 176–178; sequence RDQ. The active-site Cysteine persulfide intermediate is Cys-226. The segment at 407 to 431 is disordered; that stretch reads PKPPNEDLLDTNESSDLVSPKRSAC.

This sequence belongs to the MnmA/TRMU family.

It is found in the cytoplasm. It catalyses the reaction S-sulfanyl-L-cysteinyl-[protein] + uridine(34) in tRNA + AH2 + ATP = 2-thiouridine(34) in tRNA + L-cysteinyl-[protein] + A + AMP + diphosphate + H(+). Functionally, catalyzes the 2-thiolation of uridine at the wobble position (U34) of tRNA, leading to the formation of s(2)U34. The sequence is that of tRNA-specific 2-thiouridylase MnmA from Beijerinckia indica subsp. indica (strain ATCC 9039 / DSM 1715 / NCIMB 8712).